The chain runs to 337 residues: Anaerobic sulfite reductase subunit C (337 aa).

[4Fe-4S] cluster contacts are provided by Cys-115, Cys-121, Cys-153, Cys-157, Cys-180, Cys-183, Cys-186, Cys-190, Cys-212, Cys-215, Cys-218, and Cys-222. Position 157 (Cys-157) interacts with siroheme. 4Fe-4S ferredoxin-type domains follow at residues 171 to 200 (AKMR…CLAL) and 203 to 232 (GKAV…RKPD).

The protein belongs to the nitrite and sulfite reductase 4Fe-4S domain family. As to quaternary structure, the anaerobic sulfite reductase seems to consist of three subunits. [4Fe-4S] cluster serves as cofactor. The cofactor is siroheme.

The protein resides in the cytoplasm. The enzyme catalyses hydrogen sulfide + 3 NAD(+) + 3 H2O = sulfite + 3 NADH + 4 H(+). The protein operates within sulfur metabolism; sulfite reduction. This enzyme catalyzes the hydrogen sulfide production from sulfite. It is strictly anaerobic. It is regulated by electron acceptors rather than by cysteine. This is Anaerobic sulfite reductase subunit C (asrC) from Salmonella typhi.